We begin with the raw amino-acid sequence, 294 residues long: MGDYLVKALAYNGQVRAYAARTTETVAEAQRRHQTWPTASAALGRALTAGVMMGAMLKGEETLTIKIDGGGPIGVILVDSNARGEVRGYVTNPHVHFELNEHGKLDVARAVGKNGMLTVVKDLGLRDFFTGQVPLISGELGDDFTYYFASSEQIPSSVGVGVLVNPDHTIRAAGGFIIQLMPGTEENTITRIEERLKQIPPVSRMIERGLSPEQLLEQLLGDGGVRVLETMPVSFVCRCSRERIADALISLGPEEIQDIIDKEGQAEASCHFCNETYHFDKAELEQLKQLAKKE.

Cystine bridges form between C237/C239 and C270/C273.

The protein belongs to the HSP33 family. Post-translationally, under oxidizing conditions two disulfide bonds are formed involving the reactive cysteines. Under reducing conditions zinc is bound to the reactive cysteines and the protein is inactive.

The protein localises to the cytoplasm. Functionally, redox regulated molecular chaperone. Protects both thermally unfolding and oxidatively damaged proteins from irreversible aggregation. Plays an important role in the bacterial defense system toward oxidative stress. This Geobacillus kaustophilus (strain HTA426) protein is 33 kDa chaperonin.